A 526-amino-acid polypeptide reads, in one-letter code: Inosine-5'-monophosphate dehydrogenase (526 aa).

2 CBS domains span residues 120–179 (FIQD…EDPV) and 183–239 (MATD…PLAS). Residues 276 to 278 (DSS) and 326 to 328 (GMG) each bind NAD(+). Residues Gly328 and Gly330 each coordinate K(+). Ser331 contributes to the IMP binding site. A K(+)-binding site is contributed by Cys333. Cys333 acts as the Thioimidate intermediate in catalysis. IMP contacts are provided by residues 366–368 (DGG) and 389–390 (GS). Arg439 acts as the Proton acceptor in catalysis. An IMP-binding site is contributed by Gln451. A K(+)-binding site is contributed by Ser506. Positions 506 to 526 (SAQTEGNVHGLHTHEKKLYSS) are disordered. Basic and acidic residues predominate over residues 517-526 (HTHEKKLYSS).

Belongs to the IMPDH/GMPR family. Homotetramer. Requires K(+) as cofactor.

It localises to the cytoplasm. The catalysed reaction is IMP + NAD(+) + H2O = XMP + NADH + H(+). The protein operates within secondary metabolite biosynthesis; terpenoid biosynthesis. Its activity is regulated as follows. Mycophenolic acid (MPA) is a non-competitive inhibitor that prevents formation of the closed enzyme conformation by binding to the same site as the amobile flap. In contrast, mizoribine monophosphate (MZP) is a competitive inhibitor that induces the closed conformation. MPA is a potent inhibitor of mammalian IMPDHs but a poor inhibitor of the bacterial enzymes. MZP is a more potent inhibitor of bacterial IMPDH. Functionally, catalyzes the conversion of inosine 5'-phosphate (IMP) to xanthosine 5'-phosphate (XMP), the first committed and rate-limiting step in the de novo synthesis of guanine nucleotides, and therefore plays an important role in the regulation of cell growth. Part of the gene cluster that mediates the biosynthesis of mycophenolic acid (MPA), the first isolated antibiotic natural product in the world. Does not play a role in the biosynthesis of MPA, but is involved in self resistance to MPA, since MPA acts as an inhibitor of IMP dehydrogenases. The protein is Inosine-5'-monophosphate dehydrogenase of Penicillium roqueforti (strain FM164).